A 70-amino-acid polypeptide reads, in one-letter code: DNA-directed RNA polymerase subunit omega (70 aa).

It belongs to the RNA polymerase subunit omega family. In terms of assembly, the RNAP catalytic core consists of 2 alpha, 1 beta, 1 beta' and 1 omega subunit. When a sigma factor is associated with the core the holoenzyme is formed, which can initiate transcription.

It carries out the reaction RNA(n) + a ribonucleoside 5'-triphosphate = RNA(n+1) + diphosphate. Promotes RNA polymerase assembly. Latches the N- and C-terminal regions of the beta' subunit thereby facilitating its interaction with the beta and alpha subunits. This chain is DNA-directed RNA polymerase subunit omega, found in Staphylococcus epidermidis (strain ATCC 12228 / FDA PCI 1200).